A 478-amino-acid polypeptide reads, in one-letter code: Cytochrome c-552 (478 aa).

An N-terminal signal peptide occupies residues 1 to 26; it reads MTRIKINARRIFSLLIPFFFFTSVHA. Heme c is bound at residue H94. Residues C122, C125, and K126 each coordinate heme. Heme c is bound by residues C160, C163, H164, C209, C212, and H213. Ca(2+) is bound by residues E215, Y216, K261, and Q263. Residue Y216 participates in substrate binding. Residue H264 participates in substrate binding. Positions 275, 282, 285, 286, 301, 314, 317, 318, and 393 each coordinate heme c.

The protein belongs to the cytochrome c-552 family. It depends on Ca(2+) as a cofactor. Heme c is required as a cofactor.

The protein localises to the periplasm. The enzyme catalyses 6 Fe(III)-[cytochrome c] + NH4(+) + 2 H2O = 6 Fe(II)-[cytochrome c] + nitrite + 8 H(+). It functions in the pathway nitrogen metabolism; nitrate reduction (assimilation). Catalyzes the reduction of nitrite to ammonia, consuming six electrons in the process. The sequence is that of Cytochrome c-552 from Escherichia coli O17:K52:H18 (strain UMN026 / ExPEC).